Reading from the N-terminus, the 251-residue chain is Small ribosomal subunit protein uS3 (251 aa).

One can recognise a KH type-2 domain in the interval 39-112 (IRKYINEVYA…NIILNVVEVR (74 aa)). Positions 222-251 (EEKKPAKKFNKKPVAAKPANKEEKSSKEVK) are disordered. Basic and acidic residues predominate over residues 240–251 (ANKEEKSSKEVK).

It belongs to the universal ribosomal protein uS3 family. Part of the 30S ribosomal subunit. Forms a tight complex with proteins S10 and S14.

In terms of biological role, binds the lower part of the 30S subunit head. Binds mRNA in the 70S ribosome, positioning it for translation. The sequence is that of Small ribosomal subunit protein uS3 from Anaeroplasma abactoclasticum.